The following is a 247-amino-acid chain: 23S rRNA (guanosine-2'-O-)-methyltransferase RlmB (247 aa).

Residues Gly-197, Ile-217, and Leu-226 each coordinate S-adenosyl-L-methionine.

It belongs to the class IV-like SAM-binding methyltransferase superfamily. RNA methyltransferase TrmH family. RlmB subfamily.

The protein localises to the cytoplasm. It catalyses the reaction guanosine(2251) in 23S rRNA + S-adenosyl-L-methionine = 2'-O-methylguanosine(2251) in 23S rRNA + S-adenosyl-L-homocysteine + H(+). Functionally, specifically methylates the ribose of guanosine 2251 in 23S rRNA. The sequence is that of 23S rRNA (guanosine-2'-O-)-methyltransferase RlmB from Vibrio cholerae serotype O1 (strain ATCC 39315 / El Tor Inaba N16961).